An 83-amino-acid chain; its full sequence is Scyreptin (83 aa).

Its function is as follows. cationic antimicrobial peptide that exhibits a potent and broad-spectrum antimicrobial activity against both bacteria and fungi, as well as against the multidrug-resistant bacteria P.aeruginosa. Exhibits rapid bactericidal kinetic. Acts by destroying the integrity of bacterial membranes, leading to bacterial death. Also exhibits potent anti-biofilm activity against P.aeruginosa. Shows high thermal stability and ion tolerance, as it maintains antibacterial activity even when heated to 100 degrees Celsius for 30 minutes and in presence of high levels of NaCl, CaCl(2) and MgCl(2). Does not show cytotoxicity and hemolytic activity. In a mouse model of burn infection, exhibits a remarkably reduction in the bacterial load caused by multidrug-resistant P.aeruginosa at the site of infection, and promotes wound healing. The protein is Scyreptin of Scylla paramamosain (Mud crab).